A 346-amino-acid chain; its full sequence is 3-keto-steroid reductase ERG27 (346 aa).

NADP(+) contacts are provided by Leu-19, Thr-42, and Lys-48. Residues Ser-182 and Tyr-205 each act as proton donor in the active site. Tyr-205, Lys-209, and Ser-241 together coordinate NADP(+). The active-site Lowers pKa of active site Tyr is Lys-209. A helical transmembrane segment spans residues 242 to 262 (FSFFQYLNVFTYYGMLFLFYL). Asn-272 is a glycosylation site (N-linked (GlcNAc...) asparagine).

It belongs to the short-chain dehydrogenases/reductases (SDR) family. ERG27 subfamily. In terms of assembly, heterotetramer of ERG25, ERG26, ERG27 and ERG28. ERG28 acts as a scaffold to tether ERG27 and other 4,4-demethylation-related enzymes, forming a demethylation enzyme complex, in the endoplasmic reticulum. Interacts with ERG25 and ERG28. Also interacts with ERG7, but only in lipid particles.

The protein localises to the endoplasmic reticulum membrane. It localises to the lipid droplet. The catalysed reaction is 3-dehydro-4alpha-methylzymosterol + NADPH + H(+) = 4alpha-methylzymosterol + NADP(+). The protein operates within steroid biosynthesis; zymosterol biosynthesis; zymosterol from lanosterol: step 5/6. In terms of biological role, 3-keto-steroid reductase; part of the third module of ergosterol biosynthesis pathway that includes the late steps of the pathway. ERG27 is a catalytic component of the C-4 demethylation complex that catalyzes the reduction of the keto group on the C-3. The third module or late pathway involves the ergosterol synthesis itself through consecutive reactions that mainly occur in the endoplasmic reticulum (ER) membrane. Firstly, the squalene synthase ERG9 catalyzes the condensation of 2 farnesyl pyrophosphate moieties to form squalene, which is the precursor of all steroids. Squalene synthase is crucial for balancing the incorporation of farnesyl diphosphate (FPP) into sterol and nonsterol isoprene synthesis. Secondly, the squalene epoxidase ERG1 catalyzes the stereospecific oxidation of squalene to (S)-2,3-epoxysqualene, which is considered to be a rate-limiting enzyme in steroid biosynthesis. Then, the lanosterol synthase ERG7 catalyzes the cyclization of (S)-2,3 oxidosqualene to lanosterol, a reaction that forms the sterol core. In the next steps, lanosterol is transformed to zymosterol through a complex process involving various demethylation, reduction and desaturation reactions. The lanosterol 14-alpha-demethylase ERG11 (also known as CYP51) catalyzes C14-demethylation of lanosterol to produce 4,4'-dimethyl cholesta-8,14,24-triene-3-beta-ol, which is critical for ergosterol biosynthesis. The C-14 reductase ERG24 reduces the C14=C15 double bond of 4,4-dimethyl-cholesta-8,14,24-trienol to produce 4,4-dimethyl-cholesta-8,24-dienol. 4,4-dimethyl-cholesta-8,24-dienol is substrate of the C-4 demethylation complex ERG25-ERG26-ERG27 in which ERG25 catalyzes the three-step monooxygenation required for the demethylation of 4,4-dimethyl and 4alpha-methylsterols, ERG26 catalyzes the oxidative decarboxylation that results in a reduction of the 3-beta-hydroxy group at the C-3 carbon to an oxo group, and ERG27 is responsible for the reduction of the keto group on the C-3. ERG28 has a role as a scaffold to help anchor ERG25, ERG26 and ERG27 to the endoplasmic reticulum and ERG29 regulates the activity of the iron-containing C4-methylsterol oxidase ERG25. Then, the sterol 24-C-methyltransferase ERG6 catalyzes the methyl transfer from S-adenosyl-methionine to the C-24 of zymosterol to form fecosterol. The C-8 sterol isomerase ERG2 catalyzes the reaction which results in unsaturation at C-7 in the B ring of sterols and thus converts fecosterol to episterol. The sterol-C5-desaturase ERG3 then catalyzes the introduction of a C-5 double bond in the B ring to produce 5-dehydroepisterol. The C-22 sterol desaturase ERG5 further converts 5-dehydroepisterol into ergosta-5,7,22,24(28)-tetraen-3beta-ol by forming the C-22(23) double bond in the sterol side chain. Finally, ergosta-5,7,22,24(28)-tetraen-3beta-ol is substrate of the C-24(28) sterol reductase ERG4 to produce ergosterol. Its function is as follows. Facilitates the association of ERG7 with lipid particles preventing its digestion in the endoplasmic reticulum and the lipid particles. The chain is 3-keto-steroid reductase ERG27 from Candida albicans (strain SC5314 / ATCC MYA-2876) (Yeast).